A 252-amino-acid polypeptide reads, in one-letter code: Glucosamine-6-phosphate deaminase (252 aa).

The active-site Proton acceptor; for enolization step is aspartate 67. Asparagine 137 serves as the catalytic For ring-opening step. The active-site Proton acceptor; for ring-opening step is the histidine 139. Residue glutamate 144 is the For ring-opening step of the active site.

Belongs to the glucosamine/galactosamine-6-phosphate isomerase family. NagB subfamily.

It carries out the reaction alpha-D-glucosamine 6-phosphate + H2O = beta-D-fructose 6-phosphate + NH4(+). Its pathway is amino-sugar metabolism; N-acetylneuraminate degradation; D-fructose 6-phosphate from N-acetylneuraminate: step 5/5. Its function is as follows. Catalyzes the reversible isomerization-deamination of glucosamine 6-phosphate (GlcN6P) to form fructose 6-phosphate (Fru6P) and ammonium ion. The chain is Glucosamine-6-phosphate deaminase from Staphylococcus aureus (strain bovine RF122 / ET3-1).